Here is a 505-residue protein sequence, read N- to C-terminus: ATP synthase subunit alpha (505 aa).

170 to 177 contacts ATP; that stretch reads GDRQTGKS.

The protein belongs to the ATPase alpha/beta chains family. In terms of assembly, F-type ATPases have 2 components, CF(1) - the catalytic core - and CF(0) - the membrane proton channel. CF(1) has five subunits: alpha(3), beta(3), gamma(1), delta(1), epsilon(1). CF(0) has four main subunits: a(1), b(1), b'(1) and c(9-12).

It is found in the cellular thylakoid membrane. The enzyme catalyses ATP + H2O + 4 H(+)(in) = ADP + phosphate + 5 H(+)(out). Its function is as follows. Produces ATP from ADP in the presence of a proton gradient across the membrane. The alpha chain is a regulatory subunit. The protein is ATP synthase subunit alpha of Prochlorococcus marinus (strain MIT 9312).